The primary structure comprises 248 residues: tRNA pseudouridine synthase A (248 aa).

Asp-53 (nucleophile) is an active-site residue. Tyr-111 serves as a coordination point for substrate.

Belongs to the tRNA pseudouridine synthase TruA family. In terms of assembly, homodimer.

It catalyses the reaction uridine(38/39/40) in tRNA = pseudouridine(38/39/40) in tRNA. Functionally, formation of pseudouridine at positions 38, 39 and 40 in the anticodon stem and loop of transfer RNAs. The protein is tRNA pseudouridine synthase A of Streptococcus thermophilus (strain CNRZ 1066).